The following is a 224-amino-acid chain: Peptide deformylase 3 (224 aa).

Fe cation contacts are provided by cysteine 135 and histidine 177. Glutamate 178 is an active-site residue. Histidine 181 lines the Fe cation pocket.

It belongs to the polypeptide deformylase family. The cofactor is Fe(2+).

It catalyses the reaction N-terminal N-formyl-L-methionyl-[peptide] + H2O = N-terminal L-methionyl-[peptide] + formate. Removes the formyl group from the N-terminal Met of newly synthesized proteins. Requires at least a dipeptide for an efficient rate of reaction. N-terminal L-methionine is a prerequisite for activity but the enzyme has broad specificity at other positions. This is Peptide deformylase 3 from Streptomyces avermitilis (strain ATCC 31267 / DSM 46492 / JCM 5070 / NBRC 14893 / NCIMB 12804 / NRRL 8165 / MA-4680).